We begin with the raw amino-acid sequence, 368 residues long: Agmatine deiminase (368 aa).

Cysteine 357 serves as the catalytic Amidino-cysteine intermediate.

Belongs to the agmatine deiminase family. As to quaternary structure, homodimer.

It carries out the reaction agmatine + H2O = N-carbamoylputrescine + NH4(+). It functions in the pathway amine and polyamine biosynthesis; putrescine biosynthesis via agmatine pathway; N-carbamoylputrescine from agmatine: step 1/1. Mediates the hydrolysis of agmatine into N-carbamoylputrescine in the arginine decarboxylase (ADC) pathway of putrescine biosynthesis, a basic polyamine. The sequence is that of Agmatine deiminase from Pseudomonas aeruginosa (strain LESB58).